The following is a 1121-amino-acid chain: Myelin transcription factor 1 (1121 aa).

2 disordered regions span residues 1 to 156 and 200 to 376; these read MSLE…SKGS and EAAE…MTRG. The CCHHC-type 1 zinc finger occupies 21–64; the sequence is PETTAADLSCPTPGCTGSGHVRGKYSRHRSLQSCPLAKKRKLEG. Cys30, Cys35, His48, and Cys54 together coordinate Zn(2+). The span at 41 to 50 shows a compositional bias: basic residues; that stretch reads VRGKYSRHRS. Basic and acidic residues-rich tracts occupy residues 62 to 71 and 123 to 132; these read LEGAEAEHLV and DEIHRPETAE. Low complexity predominate over residues 147 to 156; that stretch reads GSATASSKGS. Acidic residues predominate over residues 258 to 308; sequence EEEDEEEEEEEEEEEEDEEEEEEEEEEEEEEEEEEEEEEEEEEEEEEEEAA. Positions 346–358 are enriched in basic and acidic residues; the sequence is VRSDDDKDEDTHS. 2 consecutive CCHHC-type zinc fingers follow at residues 433 to 476 and 477 to 520; these read SRAE…PPEI and LAMH…KLAK. Zn(2+) contacts are provided by Cys442, Cys447, His460, Cys466, Cys486, Cys491, His504, and Cys510. Disordered regions lie at residues 517–540 and 668–774; these read KLAK…SNSD and TLDL…EERK. The segment covering 526–540 has biased composition (polar residues); the sequence is QPQTGDPSKSSSNSD. Residues 705-723 show a composition bias toward low complexity; sequence SSTSAPSSSMTSPQSSQAS. Residues 724-733 show a composition bias toward basic and acidic residues; it reads RQDEWDRPLD. A compositionally biased stretch (acidic residues) spans 759–770; that stretch reads EADDQEVSEENF. CCHHC-type zinc fingers lie at residues 791–834, 835–878, 884–927, and 937–980; these read KDIK…LRNL, MAAH…GVKV, DKED…QKEG, and KSLK…GKKG. Residues Cys800, Cys805, His818, Cys824, Cys844, Cys849, His862, Cys868, Cys893, Cys898, His911, Cys917, Cys946, Cys951, His964, and Cys970 each contribute to the Zn(2+) site.

This sequence belongs to the MYT1 family. In terms of assembly, interacts with STEAP3. Mostly in developing nervous system. Expressed in neural progenitors and oligodendrocyte lineage cells. More highly expressed in oligodendrocyte progenitors than in differentiated oligodendrocytes.

It is found in the nucleus. Its function is as follows. Binds to the promoter region of genes encoding proteolipid proteins of the central nervous system. May play a role in the development of neurons and oligodendroglia in the CNS. May regulate a critical transition point in oligodendrocyte lineage development by modulating oligodendrocyte progenitor proliferation relative to terminal differentiation and up-regulation of myelin gene transcription. The chain is Myelin transcription factor 1 (MYT1) from Homo sapiens (Human).